The primary structure comprises 437 residues: Sonic hedgehog protein (437 aa).

The N-terminal stretch at 1–24 (MLLLLARCFLVILASSLLVCPGLA) is a signal peptide. Residue Cys-25 is the site of N-palmitoyl cysteine attachment. The Cardin-Weintraub signature appears at 33–39 (KRRHPKK). Ca(2+) is bound by residues Glu-90, Glu-91, Asp-96, Thr-126, Glu-127, Asp-130, and Asp-132. The Zn(2+) site is built by His-141, Asp-148, and His-183. Residue Gly-198 is the site of Cholesterol glycine ester attachment. N-linked (GlcNAc...) asparagine glycosylation occurs at Asn-279.

Belongs to the hedgehog family. Interacts with HHATL/GUP1 which negatively regulates HHAT-mediated palmitoylation of the SHH N-terminus. Interacts with BOC and CDON. Interacts with HHIP. Interacts with DISP1 via its cholesterol anchor. Interacts with SCUBE2. Interacts with glypican GPC3. In terms of assembly, multimer. The C-terminal domain displays an autoproteolysis activity and a cholesterol transferase activity. Both activities result in the cleavage of the full-length protein and covalent attachment of a cholesterol moiety to the C-terminal of the newly generated N-terminal fragment (ShhN). Cholesterylation is required for the sonic hedgehog protein N-product targeting to lipid rafts and multimerization. ShhN is the active species in both local and long-range signaling, whereas the C-product (ShhC) is degraded in the endoplasmic reticulum. In terms of processing, N-palmitoylation by HHAT of ShhN is required for sonic hedgehog protein N-product multimerization and full activity. It is a prerequisite for the membrane-proximal positioning and the subsequent shedding of this N-terminal peptide. Post-translationally, the lipidated N- and C-terminal peptides of ShhNp can be cleaved (shedding). The N-terminal palmitoylated peptide is cleaved at the Cardin-Weintraub (CW) motif site. The cleavage reduced the interactions with heparan sulfate. The cleavage is enhanced by SCUBE2. Expressed in a number of embryonic tissues including the notochord, ventral neural tube, floor plate, lung bud, zone of polarizing activity and posterior distal mesenchyme of limbs. In the adult, expressed in lung and neural retina.

It is found in the endoplasmic reticulum membrane. It localises to the golgi apparatus membrane. The protein resides in the cell membrane. It catalyses the reaction glycyl-L-cysteinyl-[protein] + cholesterol + H(+) = [protein]-C-terminal glycyl cholesterol ester + N-terminal L-cysteinyl-[protein]. Its function is as follows. The C-terminal part of the sonic hedgehog protein precursor displays an autoproteolysis and a cholesterol transferase activity. Both activities result in the cleavage of the full-length protein into two parts (ShhN and ShhC) followed by the covalent attachment of a cholesterol moiety to the C-terminal of the newly generated ShhN. Both activities occur in the reticulum endoplasmic. Once cleaved, ShhC is degraded in the endoplasmic reticulum. In terms of biological role, the dually lipidated sonic hedgehog protein N-product (ShhNp) is a morphogen which is essential for a variety of patterning events during development. Induces ventral cell fate in the neural tube and somites. Involved in the patterning of the anterior-posterior axis of the developing limb bud. Essential for axon guidance. Binds to the patched (PTCH1) receptor, which functions in association with smoothened (SMO), to activate the transcription of target genes. In the absence of SHH, PTCH1 represses the constitutive signaling activity of SMO. In Mus musculus (Mouse), this protein is Sonic hedgehog protein.